Consider the following 310-residue polypeptide: Protease HtpX homolog (310 aa).

Transmembrane regions (helical) follow at residues N16–I36 and I55–I75. A Zn(2+)-binding site is contributed by H166. E167 is a catalytic residue. H170 is a Zn(2+) binding site. Helical transmembrane passes span V182–G202 and M214–L234. E239 is a binding site for Zn(2+).

The protein belongs to the peptidase M48B family. The cofactor is Zn(2+).

The protein resides in the cell inner membrane. This chain is Protease HtpX homolog, found in Helicobacter pylori (strain Shi470).